Consider the following 590-residue polypeptide: Guanylate-binding protein 1 (590 aa).

Positions 1–309 (MASEIHMTGP…NAISSGDLPC (309 aa)) are GTPase domain (Globular). The 242-residue stretch at 35 to 276 (TQPVVVVAIV…FCSYIFSNSK (242 aa)) folds into the GB1/RHD3-type G domain. Residues 45-52 (GLYRTGKS), 67-69 (LGS), and 97-101 (DTEGL) contribute to the GTP site. Phosphoserine is present on Ser-156. The residue at position 587 (Cys-587) is a Cysteine methyl ester. Residue Cys-587 is the site of S-farnesyl cysteine attachment. At Thr-588 the chain carries Phosphothreonine. A propeptide spans 588 to 590 (TIS) (removed in mature form).

The protein belongs to the TRAFAC class dynamin-like GTPase superfamily. GB1/RHD3 GTPase family. GB1 subfamily. In terms of assembly, homodimer; homodimerization occurs upon GTP-binding and is required for the second hydrolysis step from GDP to GMP. Undergoes conformational changes and oligomerization upon GTP-binding and hydrolysis. Heterodimer with other family members, including GBP2, GBP3, GBP4 and GBP5. Dimerization regulates subcellular location to membranous structures. Interacts with SQSTM1. Interacts (when phosphorylated) with 14-3-3 protein sigma (SFN); leading to GBP1 retention in the cytosol and inactivation. Isoprenylation is required for proper subcellular location. Post-translationally, phosphorylated at Ser-156 by PIM1 in absence of infection, inhibits GBP1: phosphorylation promotes interaction with 14-3-3 protein sigma (SFN), leading to GBP1 retention in the cytosol. Dephosphorylated in response to infection, liberating GBP1.

The protein resides in the cytoplasmic vesicle membrane. Its subcellular location is the golgi apparatus membrane. It is found in the cell membrane. It localises to the cytoplasm. The protein localises to the cytosol. The protein resides in the secreted. It carries out the reaction GTP + H2O = GDP + phosphate + H(+). It catalyses the reaction GDP + H2O = GMP + phosphate + H(+). In terms of biological role, interferon (IFN)-inducible GTPase that plays important roles in innate immunity against a diverse range of bacterial, viral and protozoan pathogens. Hydrolyzes GTP to GMP in two consecutive cleavage reactions: GTP is first hydrolyzed to GDP and then to GMP in a processive manner. Following infection, recruited to the pathogen-containing vacuoles or vacuole-escaped bacteria and promotes both inflammasome assembly and autophagy. Acts as a positive regulator of inflammasome assembly by facilitating the detection of inflammasome ligands from pathogens. Involved in the lysis of pathogen-containing vacuoles, releasing pathogens into the cytosol. Following pathogen release in the cytosol, forms a protein coat in a GTPase-dependent manner that encapsulates pathogens and promotes the detection of ligands by pattern recognition receptors. Plays a key role in inflammasome assembly in response to infection by Gram-negative bacteria: following pathogen release in the cytosol, forms a protein coat that encapsulates Gram-negative bacteria and directly binds to lipopolysaccharide (LPS), disrupting the O-antigen barrier and unmasking lipid A that is that detected by the non-canonical inflammasome effector CASP4/CASP11. Also promotes recruitment of proteins that mediate bacterial cytolysis, leading to release double-stranded DNA (dsDNA) that activates the AIM2 inflammasome. Involved in autophagy by regulating bacteriolytic peptide generation via its interaction with ubiquitin-binding protein SQSTM1, which delivers monoubiquitinated proteins to autolysosomes for the generation of bacteriolytic peptides. Confers protection to several pathogens, including the bacterial pathogens L.monocytogenes and M.bovis BCG as well as the protozoan pathogen T.gondii. Exhibits antiviral activity against influenza virus. This chain is Guanylate-binding protein 1 (GBP1), found in Chlorocebus aethiops (Green monkey).